A 969-amino-acid chain; its full sequence is Translation initiation factor IF-2 (969 aa).

Residues 96–377 (KRDPAEPVRA…NSRNQHQDRR (282 aa)) form a disordered region. Low complexity-rich tracts occupy residues 105–157 (AEPA…QAEP), 167–181 (AAPA…EPAK), and 216–252 (PSAP…PAAP). Residues 253 to 264 (DRAREEARRAAE) are compositionally biased toward basic and acidic residues. Over residues 357–366 (RAGGKGGRGG) the composition is skewed to gly residues. The tr-type G domain occupies 470 to 637 (PRAPVVTVMG…NVLLQAEILE (168 aa)). Residues 479–486 (GHVDHGKT) form a G1 region. GTP is bound at residue 479-486 (GHVDHGKT). The segment at 504–508 (GITQH) is G2. The interval 525 to 528 (DTPG) is G3. GTP contacts are provided by residues 525–529 (DTPGH) and 579–582 (NKID). A G4 region spans residues 579-582 (NKID). The segment at 615–617 (SAK) is G5.

This sequence belongs to the TRAFAC class translation factor GTPase superfamily. Classic translation factor GTPase family. IF-2 subfamily.

The protein resides in the cytoplasm. In terms of biological role, one of the essential components for the initiation of protein synthesis. Protects formylmethionyl-tRNA from spontaneous hydrolysis and promotes its binding to the 30S ribosomal subunits. Also involved in the hydrolysis of GTP during the formation of the 70S ribosomal complex. The protein is Translation initiation factor IF-2 of Bordetella parapertussis (strain 12822 / ATCC BAA-587 / NCTC 13253).